Consider the following 458-residue polypeptide: Histone acetyltransferase KAT8 (458 aa).

2 stretches are compositionally biased toward low complexity: residues 1 to 17 and 25 to 35; these read MAAQGATAAVAATTSGT and PGENAAVEGPA. Positions 1 to 52 are disordered; it reads MAAQGATAAVAATTSGTVGEGEPGPGENAAVEGPARSPGRVSPPTPARGEPE. N-acetylalanine is present on Ala2. Ser37 and Ser42 each carry phosphoserine. Residues 55–110 enclose the Tudor-knot domain; sequence VEIGETYLCRRPDSTWHSAEVIQSRVNDQEGREEFYVHYVGFNRRLDEWVDKNRLA. Lys113 carries the post-translational modification N6-acetyllysine. Positions 140–149 match the Nuclear localization signal motif; sequence RNQKRKHDEI. The MYST-type HAT domain maps to 174 to 447; it reads TKVKYVDKIH…VDSVCLKWAP (274 aa). Residues 174-458 form a sufficient for interaction with KANSL1 region; it reads TKVKYVDKIH…KHKQVKLSKK (285 aa). The C2HC MYST-type zinc-finger motif lies at 207–232; sequence LWLCEYCLKYMKFEKSYRFHLGQCQW. Residues Cys210, Cys213, His226, and Cys230 each contribute to the Zn(2+) site. N6-acetyllysine is present on Lys274. Acetyl-CoA contacts are provided by Ile317, Thr319, Arg325, Arg326, Gly327, Gly329, and Lys330. Position 348 is a phosphoserine (Ser348). The Proton donor/acceptor role is filled by Glu350. Ser354, Ser363, Tyr408, and Lys432 together coordinate acetyl-CoA.

The protein belongs to the MYST (SAS/MOZ) family. As to quaternary structure, component of a multisubunit histone acetyltransferase complex (MSL) at least composed of the MOF/KAT8, MSL1/hampin, MSL2L1 and MSL3L1. Component of the NSL complex at least composed of MOF/KAT8, KANSL1, KANSL2, KANSL3, MCRS1, PHF20, OGT1/OGT, WDR5 and HCFC1. Component of some MLL1/MLL complex, at least composed of the core components KMT2A/MLL1, ASH2L, HCFC1, WDR5 and RBBP5, as well as the facultative components BACC1, CHD8, E2F6, HSP70, INO80C, KANSL1, LAS1L, MAX, MCRS1, MGA, MOF/KAT8, PELP1, PHF20, PRP31, RING2, RUVB1/TIP49A, RUVB2/TIP49B, SENP3, TAF1, TAF4, TAF6, TAF7, TAF9 and TEX10. Interacts with the chromodomain of MORF4L1/MRG15. Interacts with ATM (via its Tudor-knot domain); possibly regulating the activity of ATM. Interacts with NELFD. In terms of processing, acetylation at Lys-274 facilitates cognate substrate Lys-binding and acetylation. Although considered as an autoacetylation event, acetylation at Lys-274 probably takes place via a non-enzymatic process following acetyl-CoA-binding, which primes KAT8 for cognate protein-lysine acetylation. In terms of tissue distribution, during oocyte development, expressed in both oocytes and granulosa cells.

The protein localises to the nucleus. It localises to the chromosome. Its subcellular location is the mitochondrion. It carries out the reaction L-lysyl-[histone] + acetyl-CoA = N(6)-acetyl-L-lysyl-[histone] + CoA + H(+). The enzyme catalyses L-lysyl-[protein] + acetyl-CoA = N(6)-acetyl-L-lysyl-[protein] + CoA + H(+). The catalysed reaction is propanoyl-CoA + L-lysyl-[protein] = N(6)-propanoyl-L-lysyl-[protein] + CoA + H(+). Its activity is regulated as follows. The acetyltransferase activity is inhibited by anacardic acid derivatives. In terms of biological role, histone acetyltransferase that catalyzes histone H4 acetylation at 'Lys-5'- and 'Lys-8' (H4K5ac and H4K8ac) or 'Lys-16' (H4K16ac), depending on the context. Catalytic component of the MSL histone acetyltransferase complex, a multiprotein complex that mediates the majority of histone H4 acetylation at 'Lys-16' (H4K16ac), an epigenetic mark that prevents chromatin compaction. H4K16ac constitutes the only acetylation mark intergenerationally transmitted and regulates key biological processes, such as oogenesis, embryonic stem cell pluripotency, hematopoiesis or glucose metabolism. The MSL complex is required for chromosome stability and genome integrity by maintaining homeostatic levels of H4K16ac. The MSL complex is also involved in gene dosage by promoting up-regulation of genes expressed by the X chromosome. X up-regulation is required to compensate for autosomal biallelic expression. The MSL complex also participates in gene dosage compensation by promoting expression of Tsix non-coding RNA. As part of the NSL histone acetyltransferase complex, catalyzes histone H4 acetylation at 'Lys-5'- and 'Lys-8' (H4K5ac and H4K8ac) at transcription start sites and promotes transcription initiation. The NSL complex also acts as a regulator of gene expression in mitochondria: KAT8 associates with mitochondrial DNA and controls expression of respiratory genes in an acetyltransferase-dependent mechanism. Also functions as an acetyltransferase for non-histone targets, such as ALKBH5, COX17, IRF3, KDM1A/LSD1, LMNA, PAX7 or TP53/p53. Acts as an inhibitor of antiviral immunity by acetylating IRF3, preventing IRF3 recruitment to promoters. Acts as a regulator of asymmetric division in muscle stem cells by mediating acetylation of PAX7. As part of the NSL complex, acetylates TP53/p53 at 'Lys-120'. Acts as a regulator of epithelial-to-mesenchymal transition as part of the NSL complex by mediating acetylation of KDM1A/LSD1. The NSL complex is required for nuclear architecture maintenance by mediating acetylation of LMNA. Promotes mitochondrial integrity by catalyzing acetylation of COX17. In addition to protein acetyltransferase activity, able to mediate protein propionylation. The sequence is that of Histone acetyltransferase KAT8 from Mus musculus (Mouse).